We begin with the raw amino-acid sequence, 802 residues long: Leucine--tRNA ligase (802 aa).

Residues 41-52 (PYPSGQGLHVGH) carry the 'HIGH' region motif. The short motif at 580–584 (KMSKS) is the 'KMSKS' region element. Position 583 (lysine 583) interacts with ATP.

This sequence belongs to the class-I aminoacyl-tRNA synthetase family.

It localises to the cytoplasm. It catalyses the reaction tRNA(Leu) + L-leucine + ATP = L-leucyl-tRNA(Leu) + AMP + diphosphate. The chain is Leucine--tRNA ligase from Alkaliphilus oremlandii (strain OhILAs) (Clostridium oremlandii (strain OhILAs)).